The following is a 325-amino-acid chain: Necdin (325 aa).

Disordered regions lie at residues 1–69 (MSEQ…IEDV) and 77–96 (AAEE…IPAP). The 200-residue stretch at 102–301 (LVQKAHELMW…QAWPSRYREA (200 aa)) folds into the MAGE domain.

Binds to the transactivation domains of E2F1 and p53. Binds also SV40 large T antigen and adenovirus E1A. Interacts with nucleobindin 1 and 2. In terms of tissue distribution, brain specific. Not detected in other tissues. Expressed in postmitotic neurons. In adult brain the highest expression is in hypothalamus. Highly expressed in thalamus and midbrain. Relatively low levels are in cerebral cortex, hippocampus, striatum, olfactory bulb, cerebellum, pons and spinal cord. Also detected in neurally differentiated embryonal carcinoma cells.

Its subcellular location is the cytoplasm. The protein localises to the nucleus. It is found in the nucleoplasm. It localises to the nucleus matrix. Growth suppressor that facilitates the entry of the cell into cell cycle arrest. Functionally similar to the retinoblastoma protein it binds to and represses the activity of cell-cycle-promoting proteins such as SV40 large T antigen, adenovirus E1A, and the transcription factor E2F. Necdin also interacts with p53 and works in an additive manner to inhibit cell growth. Also functions as a transcription factor and directly binds to specific guanosine-rich DNA sequences. The protein is Necdin (Ndn) of Mus musculus (Mouse).